The chain runs to 643 residues: Mitochondrial Rho GTPase 2 (643 aa).

Residues 1–611 (MMLGGKSSAG…SGRRSRNIRQ (611 aa)) are Cytoplasmic-facing. In terms of domain architecture, Miro 1 spans 12–179 (RTSLRVAVAG…FYFASKAVLH (168 aa)). 2 EF-hand domains span residues 195–230 (RLRR…CFGA) and 315–350 (EAMD…APDS). 8 residues coordinate Ca(2+): D208, D210, D212, E219, D328, D330, D332, and E339. The Miro 2 domain occupies 423-592 (RNVFQCFVFG…FSRIVSTAEN (170 aa)). A helical transmembrane segment spans residues 612–632 (LVNSSLLFVSVGTAVGFAGLA). Residues 633-643 (AYRAYSARKNA) are Mitochondrial intermembrane-facing.

It belongs to the mitochondrial Rho GTPase family. Expressed roots, rosette and cauline leaves, stems, flowers and siliques.

The protein resides in the mitochondrion outer membrane. Activated by calcium. In terms of biological role, calcium-binding mitochondrial GTPase involved in calcium signaling during salt stress response. May play a role in the progression of embryonic cell division, development of haploid male and female gametes, and pollen tube growth. This Arabidopsis thaliana (Mouse-ear cress) protein is Mitochondrial Rho GTPase 2.